The primary structure comprises 312 residues: Glyoxylate/hydroxypyruvate reductase A (312 aa).

R227 is a catalytic residue. Catalysis depends on H275, which acts as the Proton donor.

The protein belongs to the D-isomer specific 2-hydroxyacid dehydrogenase family. GhrA subfamily.

The protein localises to the cytoplasm. The catalysed reaction is glycolate + NADP(+) = glyoxylate + NADPH + H(+). It carries out the reaction (R)-glycerate + NAD(+) = 3-hydroxypyruvate + NADH + H(+). The enzyme catalyses (R)-glycerate + NADP(+) = 3-hydroxypyruvate + NADPH + H(+). Its function is as follows. Catalyzes the NADPH-dependent reduction of glyoxylate and hydroxypyruvate into glycolate and glycerate, respectively. In Salmonella dublin (strain CT_02021853), this protein is Glyoxylate/hydroxypyruvate reductase A.